The sequence spans 122 residues: MEEDQELERKAIEELLKEAKRGKTRAETMGPMGWMKCPLASTNKRFLINTIKNTLPSHKEQDHEQKEGDKEPAKSQAQKEENPKKHRSHPYKHSFRARGSASYSPPRKRSSQDKYEKRSNRR.

Residue Met-1 is modified to N-acetylmethionine. A disordered region spans residues 48-122 (INTIKNTLPS…DKYEKRSNRR (75 aa)). Residues 57-83 (SHKEQDHEQKEGDKEPAKSQAQKEENP) are compositionally biased toward basic and acidic residues. The span at 84-96 (KKHRSHPYKHSFR) shows a compositional bias: basic residues. Ser-104 is subject to Phosphoserine. Residues 110-122 (SSQDKYEKRSNRR) show a composition bias toward basic and acidic residues.

This chain is Protein POLR1D, isoform 2 (POLR1D), found in Homo sapiens (Human).